A 72-amino-acid chain; its full sequence is MAKQDVIELEGTVLDTLPNAMFKVELENGHEILAHVSGKIRMNYIRILPGDKVTVEMSPYDLSRGRITYRYK.

Positions 1–72 (MAKQDVIELE…SRGRITYRYK (72 aa)) constitute an S1-like domain.

Belongs to the IF-1 family. In terms of assembly, component of the 30S ribosomal translation pre-initiation complex which assembles on the 30S ribosome in the order IF-2 and IF-3, IF-1 and N-formylmethionyl-tRNA(fMet); mRNA recruitment can occur at any time during PIC assembly.

Its subcellular location is the cytoplasm. In terms of biological role, one of the essential components for the initiation of protein synthesis. Stabilizes the binding of IF-2 and IF-3 on the 30S subunit to which N-formylmethionyl-tRNA(fMet) subsequently binds. Helps modulate mRNA selection, yielding the 30S pre-initiation complex (PIC). Upon addition of the 50S ribosomal subunit IF-1, IF-2 and IF-3 are released leaving the mature 70S translation initiation complex. The chain is Translation initiation factor IF-1 from Staphylococcus epidermidis (strain ATCC 35984 / DSM 28319 / BCRC 17069 / CCUG 31568 / BM 3577 / RP62A).